The sequence spans 351 residues: UDP-N-acetylenolpyruvoylglucosamine reductase (351 aa).

Residues 11–213 (GVGGSIACFI…KQVRDQVLRI (203 aa)) form the FAD-binding PCMH-type domain. R158 is a catalytic residue. The Proton donor role is filled by S239. Residue E343 is part of the active site.

Belongs to the MurB family. The cofactor is FAD.

The protein localises to the cytoplasm. The catalysed reaction is UDP-N-acetyl-alpha-D-muramate + NADP(+) = UDP-N-acetyl-3-O-(1-carboxyvinyl)-alpha-D-glucosamine + NADPH + H(+). Its pathway is cell wall biogenesis; peptidoglycan biosynthesis. Its function is as follows. Cell wall formation. The sequence is that of UDP-N-acetylenolpyruvoylglucosamine reductase from Tropheryma whipplei (strain TW08/27) (Whipple's bacillus).